A 246-amino-acid chain; its full sequence is Zorya protein ZorB (246 aa).

Residues 20-40 (FWISYADLMTAMMVLFLVVMV) form a helical membrane-spanning segment. The 133-residue stretch at 86–218 (CHDNRISFGE…RVELRMQFFG (133 aa)) folds into the OmpA-like domain.

Belongs to the MotB family.

The protein resides in the cell inner membrane. In terms of biological role, component of antiviral defense system Zorya type I, composed of ZorA, ZorB, ZorC and ZorD. Expression of Zorya type I in E.coli (strain MG1655) confers 10,000-fold resistance to phage SECphi27, 100-fold resistance to lambda, and 10-fold resistance to T7. While most T7 infected Zorya-containing cells undergo abortive infection, a minority produce viable phage progeny. These eventually accumulate to a high multiplicity of infection, leading to culture collapse by 2 hours after initial infection. ZorA and ZorB probably assemble in the cell inner membrane and exert their effect there. This is Zorya protein ZorB from Escherichia coli O139:H28 (strain E24377A / ETEC).